We begin with the raw amino-acid sequence, 526 residues long: Fatty-acid amide hydrolase 2-B (526 aa).

Residues 12–32 form a helical membrane-spanning segment; it reads CLLVLVSGLFLALFRLLSPGT. Active-site charge relay system residues include K128 and S203. The Acyl-ester intermediate role is filled by S227.

Belongs to the amidase family.

It is found in the membrane. It catalyses the reaction N-(5Z,8Z,11Z,14Z-eicosatetraenoyl)-ethanolamine + H2O = ethanolamine + (5Z,8Z,11Z,14Z)-eicosatetraenoate. The enzyme catalyses (9Z)-octadecenamide + H2O = (9Z)-octadecenoate + NH4(+). The protein is Fatty-acid amide hydrolase 2-B (faah2b) of Danio rerio (Zebrafish).